We begin with the raw amino-acid sequence, 296 residues long: Polyamine aminopropyltransferase (296 aa).

Positions 5–238 (ELWYETLHAN…GIMTFAWATQ (234 aa)) constitute a PABS domain. Q33 serves as a coordination point for S-methyl-5'-thioadenosine. Residues H64 and D88 each contribute to the spermidine site. Residues E108 and 140 to 141 (DG) each bind S-methyl-5'-thioadenosine. The active-site Proton acceptor is D158. Spermidine is bound at residue 158-161 (DCTD). P165 contacts S-methyl-5'-thioadenosine.

Belongs to the spermidine/spermine synthase family. In terms of assembly, homodimer or homotetramer.

It localises to the cytoplasm. The catalysed reaction is S-adenosyl 3-(methylsulfanyl)propylamine + putrescine = S-methyl-5'-thioadenosine + spermidine + H(+). It participates in amine and polyamine biosynthesis; spermidine biosynthesis; spermidine from putrescine: step 1/1. Catalyzes the irreversible transfer of a propylamine group from the amino donor S-adenosylmethioninamine (decarboxy-AdoMet) to putrescine (1,4-diaminobutane) to yield spermidine. The sequence is that of Polyamine aminopropyltransferase from Yersinia pseudotuberculosis serotype O:3 (strain YPIII).